We begin with the raw amino-acid sequence, 86 residues long: Large ribosomal subunit protein bL27 (86 aa).

Gly residues predominate over residues 1–10 (MAQKKGGGST). Positions 1–20 (MAQKKGGGSTRNGRDSESKR) are disordered.

This sequence belongs to the bacterial ribosomal protein bL27 family.

This Bordetella parapertussis (strain 12822 / ATCC BAA-587 / NCTC 13253) protein is Large ribosomal subunit protein bL27.